Consider the following 665-residue polypeptide: Pre-mRNA-processing factor 39 (665 aa).

Residues 1 to 11 are compositionally biased toward basic and acidic residues; it reads MQNSHMEEYRN. The segment at 1–28 is disordered; the sequence is MQNSHMEEYRNSDNGSTGNSSEVAVVEH. Residues 12–22 are compositionally biased toward polar residues; sequence SDNGSTGNSSE. Ser44 is subject to Phosphoserine. 7 HAT repeats span residues 107-139, 141-173, 181-216, 218-251, 331-363, 365-397, and 402-434; these read NHLMAARKAFDKFFVHYPYCYGYWKKYADLEKR, DNIKQSDEVYRRGLQAIPLSVDLWIHYINFLKE, ETNTTIRGTFEHAVLAAGTDFRSDKLWEMYINWENE, GNLREVTAVYDRILGIPTQLYSHHFQRFKEHVQN, FEEGIKRPYFHVKPLEKAQPKKNWKEYLEFEIE, GTHERVVVLFERCVISCALYEEFWIKYAKYMEN, and GVRHVFSRACTVHLPKKPMAHMLWAAFEEQQGN. Residues 599 to 622 are compositionally biased toward basic and acidic residues; the sequence is QDTLKRKAENGSEEPEEKKAHTED. A disordered region spans residues 599-625; the sequence is QDTLKRKAENGSEEPEEKKAHTEDLSS.

Belongs to the PRP39 family.

The protein localises to the nucleus. In terms of biological role, involved in pre-mRNA splicing. The sequence is that of Pre-mRNA-processing factor 39 (Prpf39) from Mus musculus (Mouse).